The chain runs to 421 residues: MTHLNLRLKDVDPEIFEAMEKELSRQREKIELIASENFVSRAVMEAMGSHLTNKYAEGLPGKRYYGGCEYVDVVENLARERAKKLFGAEHVNVQPHSGAQANMAAYMAFLEPGDTVLGMNLAHGGHLTHGSPVNFSGKLYNFVSYGVEPDTEKINYEKVFELAYKHKPKMIVAGASAYPRVIDFKHLKEIADEVGAYLMVDMAHIAGLVAAGLHPSPIPYADVVTTTTHKTLRGPRGGVIFCKAEHAAKIDKTVFPGVQGGPLMHVIAAKAVAFKEALSPEFREYQQQVVNNAKALAEELKKQGLRLVSGGTDNHLMLVDVRPVGLTGKRAEQLLDEIGVTVNKNAIPYDPESPNVTSGIRIGTPAVTTRGMKEGEMAEIAEIIALVLKNPENEDKHREAARKVRDLLNRFPLYDKLPYND.

(6S)-5,6,7,8-tetrahydrofolate-binding positions include Leu121 and Gly125 to Leu127. Lys230 bears the N6-(pyridoxal phosphate)lysine mark.

It belongs to the SHMT family. Homodimer. The cofactor is pyridoxal 5'-phosphate.

It localises to the cytoplasm. It catalyses the reaction (6R)-5,10-methylene-5,6,7,8-tetrahydrofolate + glycine + H2O = (6S)-5,6,7,8-tetrahydrofolate + L-serine. It participates in one-carbon metabolism; tetrahydrofolate interconversion. It functions in the pathway amino-acid biosynthesis; glycine biosynthesis; glycine from L-serine: step 1/1. In terms of biological role, catalyzes the reversible interconversion of serine and glycine with tetrahydrofolate (THF) serving as the one-carbon carrier. This reaction serves as the major source of one-carbon groups required for the biosynthesis of purines, thymidylate, methionine, and other important biomolecules. Also exhibits THF-independent aldolase activity toward beta-hydroxyamino acids, producing glycine and aldehydes, via a retro-aldol mechanism. In Carboxydothermus hydrogenoformans (strain ATCC BAA-161 / DSM 6008 / Z-2901), this protein is Serine hydroxymethyltransferase.